A 186-amino-acid polypeptide reads, in one-letter code: Napin embryo-specific (186 aa).

The N-terminal stretch at 1–21 (MANKLFLVSATLALFFLLTNA) is a signal peptide. 2 propeptides span residues 22 to 38 (SVYR…ATNP) and 77 to 97 (PSWT…QQQG).

It belongs to the 2S seed storage albumins family. As to quaternary structure, the mature protein consists of a small and a large chain linked by disulfide bonds. In terms of tissue distribution, cotyledons and the axis.

Its function is as follows. The small, basic, water-soluble napins are one of the two major kinds of storage proteins synthesized in the seed during its maturation. The chain is Napin embryo-specific from Brassica napus (Rape).